The chain runs to 248 residues: Protein LIFEGUARD 3 (248 aa).

7 helical membrane passes run 42–62 (VYSI…TVVT), 74–94 (GLGL…LCPL), 105–125 (YLLL…TCAF), 130–150 (VILE…LYTF), 165–185 (FLFG…LFPL), 188–208 (VSVM…IVYD), and 222–242 (IWAA…LLTV).

It belongs to the BI1 family.

Its subcellular location is the membrane. This chain is Protein LIFEGUARD 3, found in Arabidopsis thaliana (Mouse-ear cress).